The sequence spans 105 residues: Large ribosomal subunit protein bL21 (105 aa).

This sequence belongs to the bacterial ribosomal protein bL21 family. As to quaternary structure, part of the 50S ribosomal subunit. Contacts protein L20.

Its function is as follows. This protein binds to 23S rRNA in the presence of protein L20. In Dictyoglomus turgidum (strain DSM 6724 / Z-1310), this protein is Large ribosomal subunit protein bL21.